The following is a 79-amino-acid chain: Three-finger toxin A2 (79 aa).

The N-terminal stretch at 1-21 (MKTLLLTLVVVTIVCLDLGNS) is a signal peptide. Intrachain disulfides connect Cys-24/Cys-41, Cys-34/Cys-59, Cys-63/Cys-71, and Cys-72/Cys-77.

Belongs to the three-finger toxin family. Short-chain subfamily. As to expression, expressed by the venom gland.

Its subcellular location is the secreted. This is Three-finger toxin A2 from Micrurus laticollaris (Balsas coral snake).